Here is a 321-residue protein sequence, read N- to C-terminus: Coiled-coil domain-containing protein 42-like 1 (321 aa).

Coiled coils occupy residues 36–144 (IRRL…EKCH) and 202–229 (IVQFSNEIHRLYIRLEKAKKKRREWELR).

It belongs to the CFAP73 family.

The protein is Coiled-coil domain-containing protein 42-like 1 of Xenopus laevis (African clawed frog).